Consider the following 691-residue polypeptide: ATP-dependent RNA helicase MRH4, mitochondrial (691 aa).

A mitochondrion-targeting transit peptide spans 1 to 31 (MLIGQVSRLSAIPPLALQHTLRPLHSSSVLA). Residues 31–148 (AAGGKRPKQS…ATMPPNLTPR (118 aa)) form a disordered region. A compositionally biased stretch (polar residues) spans 39–49 (QSPSHSRNSPR). Positions 50–68 (QKPDWEKRGSNRGRSEQPR) are enriched in basic and acidic residues. The segment covering 94–103 (SDSSSGSSAS) has biased composition (low complexity). The span at 111-126 (VPTSSRRLLPFSSSDT) shows a compositional bias: polar residues. A Q motif motif is present at residues 183–213 (RTFDDFGLEEGLVKSLKGLYGEDGKTTPIET). The 209-residue stretch at 225–433 (ASAPIGSQRV…TTNPFFTKKE (209 aa)) folds into the Helicase ATP-binding domain. 238-245 (AETGSGKT) is a binding site for ATP. The short motif at 382–385 (DEAD) is the DEAD box element. The Helicase C-terminal domain maps to 474–691 (TLAEDAKAAK…VGAMGKRVRT (218 aa)). Residues 644 to 667 (LGEGAKNNKGGKGQGPLKKDGKTA) form a disordered region.

The protein belongs to the DEAD box helicase family. MRH4 subfamily.

Its subcellular location is the mitochondrion. The enzyme catalyses ATP + H2O = ADP + phosphate + H(+). ATP-binding RNA helicase involved in mitochondrial RNA metabolism. Required for maintenance of mitochondrial DNA. The chain is ATP-dependent RNA helicase MRH4, mitochondrial (MRH4) from Cryptococcus neoformans var. neoformans serotype D (strain JEC21 / ATCC MYA-565) (Filobasidiella neoformans).